A 187-amino-acid polypeptide reads, in one-letter code: BCL2/adenovirus E1B 19 kDa protein-interacting protein 3 (187 aa).

The tract at residues 42 to 86 (LDAQHESGRSSSKSSHCDSPPRSQTPQDTNRAEIDSHSFGEKNST) is disordered. Serine 48, serine 60, serine 77, serine 79, serine 85, and serine 88 each carry phosphoserine. Over residues 50–63 (RSSSKSSHCDSPPR) the composition is skewed to low complexity. Residues 71 to 81 (NRAEIDSHSFG) show a composition bias toward basic and acidic residues. A BH3 motif is present at residues 93–118 (IERRREVESILKKNSDWIWDWSSRPE). The chain crosses the membrane as a helical span at residues 157–177 (VFLPSLLLSHLLAIGLGIYIG).

It belongs to the NIP3 family. As to quaternary structure, homodimer. Binds to BCL2. Interacts with BNIP3L and ACAA2. Interacts (via BH3 domain) with SPATA18 (via coiled-coil domains). Interacts with BOK; promotes BOK oligomerization. Interacts with PPTC7; this interaction promotes BNIP3 degradation.

It is found in the mitochondrion. The protein resides in the mitochondrion outer membrane. Apoptosis-inducing protein that can overcome BCL2 suppression. May play a role in repartitioning calcium between the two major intracellular calcium stores in association with BCL2. Involved in mitochondrial quality control via its interaction with SPATA18/MIEAP: in response to mitochondrial damage, participates in mitochondrial protein catabolic process (also named MALM) leading to the degradation of damaged proteins inside mitochondria. The physical interaction of SPATA18/MIEAP, BNIP3 and BNIP3L/NIX at the mitochondrial outer membrane may play a critical role in the translocation of lysosomal proteins from the cytoplasm to the mitochondrial matrix. The physical interaction of SPATA18/MIEAP, BNIP3 and BNIP3L/NIX at the mitochondrial outer membrane regulates the opening of a pore in the mitochondrial double membrane in order to mediate the translocation of lysosomal proteins from the cytoplasm to the mitochondrial matrix. Plays an important role in the calprotectin (S100A8/A9)-induced cell death pathway. In Mus musculus (Mouse), this protein is BCL2/adenovirus E1B 19 kDa protein-interacting protein 3.